We begin with the raw amino-acid sequence, 216 residues long: Probable nicotinate-nucleotide adenylyltransferase (216 aa).

This sequence belongs to the NadD family.

It catalyses the reaction nicotinate beta-D-ribonucleotide + ATP + H(+) = deamido-NAD(+) + diphosphate. Its pathway is cofactor biosynthesis; NAD(+) biosynthesis; deamido-NAD(+) from nicotinate D-ribonucleotide: step 1/1. Its function is as follows. Catalyzes the reversible adenylation of nicotinate mononucleotide (NaMN) to nicotinic acid adenine dinucleotide (NaAD). The polypeptide is Probable nicotinate-nucleotide adenylyltransferase (Citrifermentans bemidjiense (strain ATCC BAA-1014 / DSM 16622 / JCM 12645 / Bem) (Geobacter bemidjiensis)).